The following is a 322-amino-acid chain: Uridylate-specific endoribonuclease EndoU (322 aa).

The helical transmembrane segment at 25 to 45 (FVIVGLLITIGILSWHFYEYF) threads the bilayer. One can recognise an EndoU domain in the interval 53–322 (TPDDVLTLSK…LIGTVYPDSS (270 aa)). Active-site residues include H200, H215, and K259.

The protein belongs to the ENDOU family. As to quaternary structure, monomer. Mn(2+) is required as a cofactor. As to expression, predominantly expressed in head.

The protein localises to the membrane. The enzyme catalyses a ribonucleotidyl-ribonucleotide-RNA = a 3'-end 2',3'-cyclophospho-ribonucleotide-RNA + a 5'-end dephospho-ribonucleoside-RNA. In terms of biological role, endoribonuclease that cleaves single-stranded RNAs at uridylates and releases products that have 2'-3'-cyclic phosphate termini. Preferentially cleaves single stranded RNA at poly-U sites with CU, UC and AU sites cleaved less efficiently. May target mRNAs encoding proteins involved in lipid metabolism to regulate their expression. Regulates levels of TBPH protein, but not mRNA, by an as yet unknown mechanism. Important for neuronal development or function. The protein is Uridylate-specific endoribonuclease EndoU of Drosophila melanogaster (Fruit fly).